Here is a 335-residue protein sequence, read N- to C-terminus: Avermitilol synthase (335 aa).

Positions 80, 84, 219, 223, and 227 each coordinate Mg(2+). The DDXXD motif motif lies at 80–84 (DDQFD).

It belongs to the terpene synthase family. It depends on Mg(2+) as a cofactor.

It catalyses the reaction (2E,6E)-farnesyl diphosphate + H2O = avermitilol + diphosphate. In terms of biological role, catalyzes the cyclization of farnesyl diphosphate to avermitilol. The protein is Avermitilol synthase (tpc1) of Streptomyces avermitilis (strain ATCC 31267 / DSM 46492 / JCM 5070 / NBRC 14893 / NCIMB 12804 / NRRL 8165 / MA-4680).